A 310-amino-acid chain; its full sequence is Glutaminase (310 aa).

Substrate-binding residues include S66, N117, E161, N168, Y192, Y244, and V262. K294 carries the post-translational modification N6-acetyllysine.

This sequence belongs to the glutaminase family. Homotetramer.

The enzyme catalyses L-glutamine + H2O = L-glutamate + NH4(+). This is Glutaminase from Escherichia coli O81 (strain ED1a).